The chain runs to 233 residues: Large ribosomal subunit protein uL1 (233 aa).

It belongs to the universal ribosomal protein uL1 family. Part of the 50S ribosomal subunit.

Binds directly to 23S rRNA. The L1 stalk is quite mobile in the ribosome, and is involved in E site tRNA release. In terms of biological role, protein L1 is also a translational repressor protein, it controls the translation of the L11 operon by binding to its mRNA. The sequence is that of Large ribosomal subunit protein uL1 from Shewanella sp. (strain ANA-3).